Reading from the N-terminus, the 604-residue chain is Elongation factor 4 (604 aa).

In terms of domain architecture, tr-type G spans Asp-8–Arg-190. Residues Asp-20–Thr-25 and Asn-137–Asp-140 contribute to the GTP site.

It belongs to the TRAFAC class translation factor GTPase superfamily. Classic translation factor GTPase family. LepA subfamily.

Its subcellular location is the cell inner membrane. The enzyme catalyses GTP + H2O = GDP + phosphate + H(+). Its function is as follows. Required for accurate and efficient protein synthesis under certain stress conditions. May act as a fidelity factor of the translation reaction, by catalyzing a one-codon backward translocation of tRNAs on improperly translocated ribosomes. Back-translocation proceeds from a post-translocation (POST) complex to a pre-translocation (PRE) complex, thus giving elongation factor G a second chance to translocate the tRNAs correctly. Binds to ribosomes in a GTP-dependent manner. This Hyphomonas neptunium (strain ATCC 15444) protein is Elongation factor 4.